The following is a 212-amino-acid chain: ER lumen protein-retaining receptor 1-B (212 aa).

The Lumenal segment spans residues 1-4 (MNIF). The helical transmembrane segment at 5–24 (RFLGDISHLSAIIILLLKIW) threads the bilayer. Over 25 to 32 (KSRSCAGI) the chain is Cytoplasmic. The chain crosses the membrane as a helical span at residues 33–52 (SGKSQLLFAIVFTTRYLDLF). The segment at 47–48 (RY) is interaction with the K-D-E-L motif on target proteins. Residues 53 to 58 (TNFISF) lie on the Lumenal side of the membrane. Residues 59–79 (YNTSMKVVYVASSYATVWMIY) form a helical membrane-spanning segment. Residues 80-92 (SKFKATYDGNHDT) are Cytoplasmic-facing. The helical transmembrane segment at 93–110 (FRVEFLIVPTAILSFLVN) threads the bilayer. Residues 111–116 (HDFTPL) are Lumenal-facing. Residues 117 to 135 (EILWTFSIYLESVAILPQL) form a helical membrane-spanning segment. The Cytoplasmic segment spans residues 136–149 (FMVSKTGEAETITS). A helical membrane pass occupies residues 150-168 (HYLFALGIYRTLYLFNWIW). The tract at residues 159–169 (RTLYLFNWIWR) is interaction with the K-D-E-L motif on target proteins. Over 169-178 (RYQFEEFFDL) the chain is Lumenal. Residues 179 to 199 (IAIVAGLVQTVLYCDFFYLYI) form a helical membrane-spanning segment. At 200–212 (TKVLKGKKLSLPA) the chain is on the cytoplasmic side. An important for recycling of cargo proteins with the sequence motif K-D-E-L from the Golgi to the endoplasmic reticulum region spans residues 204–207 (KGKK).

Belongs to the ERD2 family.

The protein resides in the golgi apparatus membrane. It localises to the cytoplasmic vesicle. The protein localises to the COPI-coated vesicle membrane. Its subcellular location is the endoplasmic reticulum membrane. It is found in the endoplasmic reticulum-Golgi intermediate compartment membrane. In terms of biological role, receptor for the C-terminal sequence motif K-D-E-L that is present on endoplasmic reticulum resident proteins and that mediates their recycling from the Golgi back to the endoplasmic reticulum. The sequence is that of ER lumen protein-retaining receptor 1-B (kdelr1-b) from Xenopus laevis (African clawed frog).